The chain runs to 39 residues: Sarcotoxin-1C (39 aa).

At Arg-39 the chain carries Arginine amide.

The protein belongs to the cecropin family.

The protein resides in the secreted. Its function is as follows. Sarcotoxins, which are potent bactericidal proteins, are produced in response to injury. They are cytotoxic to both Gram-positive and Gram-negative bacteria. This Sarcophaga peregrina (Flesh fly) protein is Sarcotoxin-1C.